Here is a 520-residue protein sequence, read N- to C-terminus: D-aminopeptidase (520 aa).

The active-site Nucleophile is the Ser62. Lys65 serves as the catalytic Proton donor/acceptor. Residues 477–487 (QRSMDAPSPGE) form an important for specificity region. Asp481 is a binding site for substrate.

This sequence belongs to the peptidase S12 family. In terms of assembly, homodimer.

The enzyme catalyses Release of an N-terminal D-amino acid from a peptide, Xaa-|-Yaa-, in which Xaa is preferably D-Ala, D-Ser or D-Thr. D-amino acid amides and methyl esters also are hydrolyzed, as is glycine amide.. Inhibited by beta-lactam compounds such as 6-aminopenicillic acid, 7-aminocephalosporanic acid, benzylpenicillin and ampicillin. Inhibited by p-chloromercuribenzoate. In terms of biological role, hydrolyzes N-terminal residues in D-amino acid-containing peptides. This Brucella anthropi (Ochrobactrum anthropi) protein is D-aminopeptidase (dap).